The primary structure comprises 93 residues: Small ribosomal subunit protein uS17 (93 aa).

Belongs to the universal ribosomal protein uS17 family. In terms of assembly, part of the 30S ribosomal subunit.

In terms of biological role, one of the primary rRNA binding proteins, it binds specifically to the 5'-end of 16S ribosomal RNA. This Corynebacterium aurimucosum (strain ATCC 700975 / DSM 44827 / CIP 107346 / CN-1) (Corynebacterium nigricans) protein is Small ribosomal subunit protein uS17.